We begin with the raw amino-acid sequence, 220 residues long: Translation initiation factor 6 (220 aa).

The protein belongs to the eIF-6 family.

Its function is as follows. Binds to the 50S ribosomal subunit and prevents its association with the 30S ribosomal subunit to form the 70S initiation complex. The polypeptide is Translation initiation factor 6 (Methanoculleus marisnigri (strain ATCC 35101 / DSM 1498 / JR1)).